A 304-amino-acid chain; its full sequence is uncharacterized protein (304 aa).

The first 25 residues, 1-25, serve as a signal peptide directing secretion; sequence MVKTAMLGAVALVIALGGTCGVADA. Residues 34 to 303 form the GP-PDE domain; the sequence is PMIVAHRAGT…DSPLAAQQWR (270 aa).

This is an uncharacterized protein from Mycobacterium tuberculosis (strain CDC 1551 / Oshkosh).